The chain runs to 547 residues: Inositol-tetrakisphosphate 1-kinase 6 (547 aa).

Residue Lys-263 coordinates 1D-myo-inositol 1,3,4-trisphosphate. Arg-317 and Lys-370 together coordinate ATP. In terms of domain architecture, ATP-grasp spans 327-539 (LEGLSAEGRP…FWDAIKQSYE (213 aa)). 1D-myo-inositol 1,3,4-trisphosphate is bound by residues His-381 and Lys-415. Residues 404-415 (QEYIDHGSKIFK), Ser-430, and Ser-450 contribute to the ATP site. Mg(2+) contacts are provided by Asp-497, Asp-511, and Asn-513. Asn-513 and Ser-517 together coordinate 1D-myo-inositol 1,3,4-trisphosphate.

Belongs to the ITPK1 family. In terms of assembly, monomer. Mg(2+) is required as a cofactor. In terms of tissue distribution, highly expressed in embryos and at lower levels in roots, leaves, flowers and anthers.

The catalysed reaction is 1D-myo-inositol 3,4,5,6-tetrakisphosphate + ATP = 1D-myo-inositol 1,3,4,5,6-pentakisphosphate + ADP + H(+). It catalyses the reaction 1D-myo-inositol 1,3,4-trisphosphate + ATP = 1D-myo-inositol 1,3,4,5-tetrakisphosphate + ADP + H(+). It carries out the reaction 1D-myo-inositol 1,3,4-trisphosphate + ATP = 1D-myo-inositol 1,3,4,6-tetrakisphosphate + ADP + H(+). In terms of biological role, kinase that can phosphorylate various inositol polyphosphate such as Ins(3,4,5,6)P4 or Ins(1,3,4)P3 and participates in phytic acid biosynthesis in developing seeds. Phytic acid is the primary storage form of phosphorus in cereal grains and other plant seeds. The polypeptide is Inositol-tetrakisphosphate 1-kinase 6 (ITPK6) (Oryza sativa subsp. japonica (Rice)).